Reading from the N-terminus, the 655-residue chain is Putative sensor protein Sfri_3689 (655 aa).

The signal sequence occupies residues 1-17 (MKTLLLLLIIITMPVLA). Residues 252 to 272 (FALAILVAIMSAIGMIFTGFI) form a helical membrane-spanning segment. The Histidine kinase domain occupies 419 to 653 (GIAHEINNPT…QIRLIFALAQ (235 aa)). His422 carries the post-translational modification Phosphohistidine; by autocatalysis.

It is found in the cell membrane. It carries out the reaction ATP + protein L-histidine = ADP + protein N-phospho-L-histidine.. This chain is Putative sensor protein Sfri_3689, found in Shewanella frigidimarina (strain NCIMB 400).